A 316-amino-acid polypeptide reads, in one-letter code: HPr kinase/phosphorylase (316 aa).

Residues His143 and Lys164 contribute to the active site. 158–165 (GEAGSGKS) contacts ATP. Residue Ser165 coordinates Mg(2+). The Proton acceptor; for phosphorylation activity. Proton donor; for dephosphorylation activity role is filled by Asp182. The segment at 206–215 (LEVRGLGVLN) is important for the catalytic mechanism of both phosphorylation and dephosphorylation. Glu207 lines the Mg(2+) pocket. Arg251 is a catalytic residue. The interval 272-277 (PVMPGR) is important for the catalytic mechanism of dephosphorylation.

The protein belongs to the HPrK/P family. In terms of assembly, homohexamer. The cofactor is Mg(2+).

The catalysed reaction is [HPr protein]-L-serine + ATP = [HPr protein]-O-phospho-L-serine + ADP + H(+). It carries out the reaction [HPr protein]-O-phospho-L-serine + phosphate + H(+) = [HPr protein]-L-serine + diphosphate. Functionally, catalyzes the ATP- as well as the pyrophosphate-dependent phosphorylation of a specific serine residue in HPr, a phosphocarrier protein of the phosphoenolpyruvate-dependent sugar phosphotransferase system (PTS). HprK/P also catalyzes the pyrophosphate-producing, inorganic phosphate-dependent dephosphorylation (phosphorolysis) of seryl-phosphorylated HPr (P-Ser-HPr). The protein is HPr kinase/phosphorylase of Stenotrophomonas maltophilia (strain K279a).